The sequence spans 243 residues: MLTFLIPTAKEMVIPKESYPHLLPQPSQAILKAMAAMTTEDLAKSYRIKEEAAKKEQQRWQDMASQQSLAYPAYQLFNGLMYRHIKRDKLTTQEQAYLTQQVYITSSFYGIIPANHPIAEHRHDFHTRIKIEGQSLKSYWRPCYNQFAKEHPQVISLLSSEFDDVFSKDCKQLWISPKFMAEKEGRFKTHSTISKKARGAFLTACMENNCQTVDSLKSLVFAGFYYHPDLSTDHEFVYIKKEA.

This sequence belongs to the UPF0246 family.

The chain is UPF0246 protein MGAS9429_Spy1799 from Streptococcus pyogenes serotype M12 (strain MGAS9429).